The chain runs to 440 residues: FAD-dependent monooxygenase afoD (440 aa).

A helical transmembrane segment spans residues 10–30; the sequence is PLSIAIIGGGIIGLMTALGLL. Residues E41, L145, and D320 each contribute to the FAD site. A glycan (N-linked (GlcNAc...) asparagine) is linked at N352.

This sequence belongs to the paxM FAD-dependent monooxygenase family. FAD serves as cofactor.

It localises to the membrane. FAD-dependent monooxygenase; part of the gene cluster that mediates the biosynthesis of asperfuranone, a probable antitumor agent. The polyketide synthase afoG is responsible for producing the 3,5-dimethyloctadienone moiety from acetyl-CoA, three malonyl-CoA, and two S-adenosyl methionines (SAM). The 3,5-dimethyloctadienone moiety is then loaded onto the SAT domain of afoE and extended with four malonyl-CoA and one SAM, which leads to the formation of 2,4-dihydroxy-6-(5,7-dimethyl-2-oxo-trans-3-trans-5-nonadienyl)-3-methylbenzaldehyde (compound 2) after reductive release and aldol condensation. AfoD is the next enzyme in the biosynthesis sequence and hydroxylates the side chain at the benzylic position of compound 2. After benzylic hydroxylation, a furan ring is formed after five-member ring hemiacetal formation and water elimination. AfoF and afoC are proposed to oxidize the R-diketone proton and to reduce the unconjugated carbonyl group, respectively, to generate asperfuranone. Since no intermediates could be isolated from afoF and afoC deletants, the sequence of these two enzymes is not fully understood. Moreover, since afoC deletant still produces a small amount of asperfuranone, other endogenous oxidoreductases might catalyze the same reaction with much less efficiency. The protein is FAD-dependent monooxygenase afoD of Emericella nidulans (strain FGSC A4 / ATCC 38163 / CBS 112.46 / NRRL 194 / M139) (Aspergillus nidulans).